A 296-amino-acid polypeptide reads, in one-letter code: MSLHSPGKAFRAALTKENPLQIVGTINANHALLAQRAGYQAIYLSGGGVAAGSLGLPDLGISTLDDVLTDIRRITDVCSLPLLVDADIGFGSSAFNVARTVKSMIKAGAAGLHIEDQVGAKRCGHRPNKAIVSKEEMVDRIRAAVDAKTDPDFVIMARTDALAVEGLDAAIERAQAYVEAGAEMLFPEAITELAMYRQFADAVQVPILANITEFGATPLFTTDELRSAHVAMALYPLSAFRAMNRAAEHVYNVLRQEGTQKSVIDTMQTRNELYESINYYQYEEKLDNLFARSQVK.

45-47 (SGG) is a substrate binding site. The Mg(2+) site is built by Asp85 and Asp87. Substrate contacts are provided by residues 123 to 124 (CG), Arg158, Glu188, 210 to 212 (NIT), Arg241, and Arg270.

Belongs to the isocitrate lyase/PEP mutase superfamily. Methylisocitrate lyase family. Homotetramer; dimer of dimers. It depends on Mg(2+) as a cofactor.

The catalysed reaction is (2S,3R)-3-hydroxybutane-1,2,3-tricarboxylate = pyruvate + succinate. The protein operates within organic acid metabolism; propanoate degradation. Its function is as follows. Involved in the catabolism of short chain fatty acids (SCFA) via the 2-methylcitrate cycle I (propionate degradation route). Catalyzes the thermodynamically favored C-C bond cleavage of (2R,3S)-2-methylisocitrate to yield pyruvate and succinate via an alpha-carboxy-carbanion intermediate. This Escherichia coli (strain K12) protein is 2-methylisocitrate lyase.